The chain runs to 142 residues: Small ribosomal subunit protein uS12 (142 aa).

The segment at 1 to 44 (MTNGKYAARKLKKDRQQRRWSDSEYARRERGLGKKSDPLEGAPQ) is disordered. Basic residues predominate over residues 7-16 (AARKLKKDRQ). The span at 17–38 (QRRWSDSEYARRERGLGKKSDP) shows a compositional bias: basic and acidic residues.

The protein belongs to the universal ribosomal protein uS12 family. Part of the 30S ribosomal subunit.

In terms of biological role, with S4 and S5 plays an important role in translational accuracy. Located at the interface of the 30S and 50S subunits. The polypeptide is Small ribosomal subunit protein uS12 (Halobacterium salinarum (strain ATCC 29341 / DSM 671 / R1)).